The primary structure comprises 91 residues: MGRSLKKGPFIADSLLRKVEKQNDTDDKSVIKTWSRASTILPMMIGHTIAVHNGKSHVPVFITEQMVGHKLGEFAPTRTFKGHIKDKKGGR.

This sequence belongs to the universal ribosomal protein uS19 family.

In terms of biological role, protein S19 forms a complex with S13 that binds strongly to the 16S ribosomal RNA. The sequence is that of Small ribosomal subunit protein uS19 from Parasynechococcus marenigrum (strain WH8102).